The chain runs to 498 residues: ATP synthase subunit beta, chloroplastic (498 aa).

172 to 179 (GGAGVGKT) is a binding site for ATP.

It belongs to the ATPase alpha/beta chains family. In terms of assembly, F-type ATPases have 2 components, CF(1) - the catalytic core - and CF(0) - the membrane proton channel. CF(1) has five subunits: alpha(3), beta(3), gamma(1), delta(1), epsilon(1). CF(0) has four main subunits: a(1), b(1), b'(1) and c(9-12).

Its subcellular location is the plastid. The protein resides in the chloroplast thylakoid membrane. It carries out the reaction ATP + H2O + 4 H(+)(in) = ADP + phosphate + 5 H(+)(out). Produces ATP from ADP in the presence of a proton gradient across the membrane. The catalytic sites are hosted primarily by the beta subunits. This Nicotiana sp. (Tobacco) protein is ATP synthase subunit beta, chloroplastic.